Here is a 334-residue protein sequence, read N- to C-terminus: Heme A synthase (334 aa).

5 helical membrane-spanning segments follow: residues 6 to 26 (ITRW…IGGI), 93 to 113 (GRIT…QGVI), 119 to 139 (LPYI…WYMV), 154 to 174 (LAFH…QLIK), and 189 to 209 (LIFS…GALV). His-253 contributes to the heme binding site. The next 3 helical transmembrane spans lie at 255–275 (LGGF…FKVK), 282–302 (IAYF…ITIV), and 305–325 (VPII…SIII). His-313 contacts heme.

Belongs to the COX15/CtaA family. Type 2 subfamily. In terms of assembly, interacts with CtaB. Heme b serves as cofactor.

Its subcellular location is the cell membrane. The enzyme catalyses Fe(II)-heme o + 2 A + H2O = Fe(II)-heme a + 2 AH2. It participates in porphyrin-containing compound metabolism; heme A biosynthesis; heme A from heme O: step 1/1. Catalyzes the conversion of heme O to heme A by two successive hydroxylations of the methyl group at C8. The first hydroxylation forms heme I, the second hydroxylation results in an unstable dihydroxymethyl group, which spontaneously dehydrates, resulting in the formyl group of heme A. The sequence is that of Heme A synthase from Rickettsia prowazekii (strain Madrid E).